The primary structure comprises 491 residues: Spermatogenesis-defective protein 39 homolog (491 aa).

Residue Thr21 is modified to Phosphothreonine. Over residues 72 to 81 (KETAGSSGST) the composition is skewed to polar residues. The segment at 72–101 (KETAGSSGSTPEGREQLKGRNSFYTQLPKP) is disordered. Phosphothreonine is present on Thr115. 3 positions are modified to phosphoserine: Ser119, Ser122, and Ser128. Residues 121-141 (QSLSDALSDTPAKSYAPELGR) are disordered. Residue Thr130 is modified to Phosphothreonine.

It belongs to the SPE39 family. In terms of assembly, interacts with VPS33B. Associates with the homotypic fusion and vacuole protein sorting (HOPS) complex; impaired by VPS33B. Interacts with RAB11A.

It localises to the cytoplasm. The protein resides in the cytoplasmic vesicle. The protein localises to the early endosome. Its subcellular location is the recycling endosome. It is found in the late endosome. Functionally, proposed to be involved in endosomal maturation implicating in part VPS33B. In epithelial cells, the VPS33B:VIPAS39 complex may play a role in the apical RAB11A-dependent recycling pathway and in the maintenance of the apical-basolateral polarity. May play a role in lysosomal trafficking, probably via association with the core HOPS complex in a discrete population of endosomes; the functions seems to be independent of VPS33B. May play a role in vesicular trafficking during spermatogenesis. May be involved in direct or indirect transcriptional regulation of E-cadherin. In Mus musculus (Mouse), this protein is Spermatogenesis-defective protein 39 homolog (Vipas39).